The following is a 327-amino-acid chain: MIDFGNFYQQIAKGPLSHWLNTLPSQLSSWQQESLHGKFKLWFNSLEHLPSLKPTSLDLNDSVTARIEPDISVGQREGIEKLLRNLMPWRKGPFSLYGVDINTEWRSDWKWQRVLPHISPLKNRLILDVGCGSGYHLWRMVGEGATMAVGIDPMQLFLCQFEAVRKLLGDDQRAHVLPLGIEQLPELAAFDTVFSMGVLYHRRSPLDHLWQLKNQLVAGGELVLETLVIEGDENQVLVPGERYAQMRNVYFIPSAVALTTWLEKCGFVDVRIVDICTTTTQEQRRTDWMITESLAEFLDPEDPTKTVEGYPAPVRAVLVARKPGAEL.

Carboxy-S-adenosyl-L-methionine is bound by residues lysine 91, tryptophan 105, lysine 110, glycine 130, 181 to 182 (IE), methionine 196, tyrosine 200, and arginine 315.

This sequence belongs to the class I-like SAM-binding methyltransferase superfamily. CmoB family. As to quaternary structure, homotetramer.

It catalyses the reaction carboxy-S-adenosyl-L-methionine + 5-hydroxyuridine(34) in tRNA = 5-carboxymethoxyuridine(34) in tRNA + S-adenosyl-L-homocysteine + H(+). Catalyzes carboxymethyl transfer from carboxy-S-adenosyl-L-methionine (Cx-SAM) to 5-hydroxyuridine (ho5U) to form 5-carboxymethoxyuridine (cmo5U) at position 34 in tRNAs. This is tRNA U34 carboxymethyltransferase from Pectobacterium atrosepticum (strain SCRI 1043 / ATCC BAA-672) (Erwinia carotovora subsp. atroseptica).